A 168-amino-acid polypeptide reads, in one-letter code: uncharacterized protein (168 aa).

A run of 2 helical transmembrane segments spans residues 4-24 and 94-114; these read IIAL…PEEE and IMVG…GFAW.

The protein to A.aeolicus aq_1446.

The protein localises to the cell membrane. This is an uncharacterized protein from Aquifex aeolicus (strain VF5).